The chain runs to 115 residues: NADH-ubiquinone oxidoreductase chain 3 (115 aa).

The next 3 membrane-spanning stretches (helical) occupy residues 3–23, 55–75, and 84–104; these read LIMT…IAFW, FFLV…LLPL, and LTTM…SLAY.

The protein belongs to the complex I subunit 3 family. As to quaternary structure, core subunit of respiratory chain NADH dehydrogenase (Complex I) which is composed of 45 different subunits. Interacts with TMEM186. Interacts with TMEM242.

It localises to the mitochondrion inner membrane. It catalyses the reaction a ubiquinone + NADH + 5 H(+)(in) = a ubiquinol + NAD(+) + 4 H(+)(out). Its function is as follows. Core subunit of the mitochondrial membrane respiratory chain NADH dehydrogenase (Complex I) which catalyzes electron transfer from NADH through the respiratory chain, using ubiquinone as an electron acceptor. Essential for the catalytic activity of complex I. The chain is NADH-ubiquinone oxidoreductase chain 3 from Ailurus fulgens (Himalayan red panda).